Reading from the N-terminus, the 207-residue chain is Small ribosomal subunit protein uS4 (207 aa).

The disordered stretch occupies residues 31–53 (KAKFDSKPGQHGRTSGARTSDYG). The 61-residue stretch at 97-157 (CRLDNVVYRM…EKSKKQARIV (61 aa)) folds into the S4 RNA-binding domain.

This sequence belongs to the universal ribosomal protein uS4 family. Part of the 30S ribosomal subunit. Contacts protein S5. The interaction surface between S4 and S5 is involved in control of translational fidelity.

In terms of biological role, one of the primary rRNA binding proteins, it binds directly to 16S rRNA where it nucleates assembly of the body of the 30S subunit. Functionally, with S5 and S12 plays an important role in translational accuracy. This is Small ribosomal subunit protein uS4 from Acidovorax ebreus (strain TPSY) (Diaphorobacter sp. (strain TPSY)).